The chain runs to 219 residues: Ribonuclease HII (219 aa).

In terms of domain architecture, RNase H type-2 spans 10 to 219; that stretch reads HLEAGTDEAG…LLPEQTVLDL (210 aa). Positions 16, 17, and 108 each coordinate a divalent metal cation.

It belongs to the RNase HII family. Requires Mn(2+) as cofactor. The cofactor is Mg(2+).

Its subcellular location is the cytoplasm. The catalysed reaction is Endonucleolytic cleavage to 5'-phosphomonoester.. In terms of biological role, endonuclease that specifically degrades the RNA of RNA-DNA hybrids. This is Ribonuclease HII from Flavobacterium psychrophilum (strain ATCC 49511 / DSM 21280 / CIP 103535 / JIP02/86).